Reading from the N-terminus, the 729-residue chain is Catalase-peroxidase (729 aa).

Positions Met1–Arg24 are disordered. Residues Trp95–Tyr217 constitute a cross-link (tryptophyl-tyrosyl-methioninium (Trp-Tyr) (with M-243)). The active-site Proton acceptor is His96. A cross-link (tryptophyl-tyrosyl-methioninium (Tyr-Met) (with W-95)) is located at residues Tyr217 to Met243. His258 is a binding site for heme b.

Belongs to the peroxidase family. Peroxidase/catalase subfamily. Homodimer or homotetramer. Heme b is required as a cofactor. Formation of the three residue Trp-Tyr-Met cross-link is important for the catalase, but not the peroxidase activity of the enzyme.

The catalysed reaction is H2O2 + AH2 = A + 2 H2O. It carries out the reaction 2 H2O2 = O2 + 2 H2O. Bifunctional enzyme with both catalase and broad-spectrum peroxidase activity. This is Catalase-peroxidase from Nitrobacter winogradskyi (strain ATCC 25391 / DSM 10237 / CIP 104748 / NCIMB 11846 / Nb-255).